Consider the following 433-residue polypeptide: 3-phosphoshikimate 1-carboxyvinyltransferase (433 aa).

3-phosphoshikimate contacts are provided by K21, S22, and R26. K21 serves as a coordination point for phosphoenolpyruvate. 2 residues coordinate phosphoenolpyruvate: G96 and R124. 3-phosphoshikimate-binding residues include S167, S168, Q169, S195, D310, and K337. Q169 provides a ligand contact to phosphoenolpyruvate. D310 (proton acceptor) is an active-site residue. R341, R384, and K410 together coordinate phosphoenolpyruvate.

Belongs to the EPSP synthase family. Monomer.

It is found in the cytoplasm. It catalyses the reaction 3-phosphoshikimate + phosphoenolpyruvate = 5-O-(1-carboxyvinyl)-3-phosphoshikimate + phosphate. It participates in metabolic intermediate biosynthesis; chorismate biosynthesis; chorismate from D-erythrose 4-phosphate and phosphoenolpyruvate: step 6/7. Catalyzes the transfer of the enolpyruvyl moiety of phosphoenolpyruvate (PEP) to the 5-hydroxyl of shikimate-3-phosphate (S3P) to produce enolpyruvyl shikimate-3-phosphate and inorganic phosphate. The sequence is that of 3-phosphoshikimate 1-carboxyvinyltransferase from Clostridium botulinum (strain Eklund 17B / Type B).